We begin with the raw amino-acid sequence, 105 residues long: Integration host factor (105 aa).

An H2TH motif, binds DNA motif is present at residues 64–71 (LPKVGKVK). The interval 82–94 (APTRRLRGLGDRQ) is lid, binds DNA.

This sequence belongs to the actinobacterial IHF (aIHF) family. Binds DNA as a monomer. In terms of assembly, (Microbial infection) Forms a complex with L5 Int and attP DNA. The complex binds attB to form products.

Its subcellular location is the cytoplasm. It localises to the nucleoid. A nucleoid-associated protein (NAP) that binds DNA without any sequence specificity. Compacts DNA. Binds along the whole chromosome in a dynamic manner, has equal affinity for the oriC site, attB and a randon 62% GC-rich sequence. Plays a role in transcription regulation. Its function is as follows. (Microbial infection) Stimulates temperate Mycobacterium phage L5 Int-mediated recombination in vitro using supercoiled attP (phage attachment site) DNA, linear attB DNA (bacterial attachment site) and L5 integrase (L5 Int or Int-L5, AC P22884). mIHF acts on L5 Int to stimulate formation of a specific intasome complex. mIHF probably stabilizes a sharp bend in the DNA during phage integration. The chain is Integration host factor from Mycolicibacterium smegmatis (strain ATCC 700084 / mc(2)155) (Mycobacterium smegmatis).